The primary structure comprises 88 residues: U18-hexatoxin-Hi1a (88 aa).

An N-terminal signal peptide occupies residues methionine 1–alanine 17. The propeptide occupies valine 18–arginine 47. 4 disulfides stabilise this stretch: cysteine 48-cysteine 63, cysteine 55-cysteine 69, cysteine 62-cysteine 81, and cysteine 71-cysteine 79.

The protein belongs to the neurotoxin 07 (Beta/delta-agtx) family. 02 (aga-3) subfamily. In terms of tissue distribution, expressed by the venom gland.

Its subcellular location is the secreted. In terms of biological role, weak insecticidal toxin with probable ion channel impairing activity. In vivo, induces paralysis when injected into sheep blowflies (L.cuprina). Shows weak toxicity, since it is only toxic at high doses, and flies recover within 24 hours. The sequence is that of U18-hexatoxin-Hi1a from Hadronyche infensa (Fraser island funnel-web spider).